Here is a 513-residue protein sequence, read N- to C-terminus: Bifunctional purine biosynthesis protein PurH (513 aa).

Residues 1 to 147 (MIQIKRALVS…KNHKNVVVLT (147 aa)) form the MGS-like domain.

It belongs to the PurH family.

It catalyses the reaction (6R)-10-formyltetrahydrofolate + 5-amino-1-(5-phospho-beta-D-ribosyl)imidazole-4-carboxamide = 5-formamido-1-(5-phospho-D-ribosyl)imidazole-4-carboxamide + (6S)-5,6,7,8-tetrahydrofolate. It carries out the reaction IMP + H2O = 5-formamido-1-(5-phospho-D-ribosyl)imidazole-4-carboxamide. It participates in purine metabolism; IMP biosynthesis via de novo pathway; 5-formamido-1-(5-phospho-D-ribosyl)imidazole-4-carboxamide from 5-amino-1-(5-phospho-D-ribosyl)imidazole-4-carboxamide (10-formyl THF route): step 1/1. Its pathway is purine metabolism; IMP biosynthesis via de novo pathway; IMP from 5-formamido-1-(5-phospho-D-ribosyl)imidazole-4-carboxamide: step 1/1. In Leptospira biflexa serovar Patoc (strain Patoc 1 / Ames), this protein is Bifunctional purine biosynthesis protein PurH.